A 113-amino-acid polypeptide reads, in one-letter code: Gas vesicle protein I2 (113 aa).

Residues 1–93 (MTPTNRHTHG…TVPEQPTHAT (93 aa)) form a disordered region. Residues 11–22 (QNAQHARRNAQQ) are compositionally biased toward low complexity. The segment covering 52-63 (EQPTSDTTNPAA) has biased composition (polar residues). The span at 69–81 (AQRTNAQNAARNA) shows a compositional bias: low complexity. Residues 82-93 (HSTVPEQPTHAT) show a composition bias toward polar residues.

The protein belongs to the gas vesicle GvpI family. As to quaternary structure, gvpF to GvpM interact with each other in vitro, and may form multi-subunit complex(es). Interacts with GvpC and GvpO.

The protein resides in the gas vesicle. Proteins GvpF to GvpM might be involved in nucleating gas vesicle formation. A minor component of the gas vesicle. Gas vesicles are hollow, gas filled proteinaceous nanostructures found in several microbial planktonic microorganisms. They allow positioning of halobacteria at the optimal depth for growth in the poorly aerated, shallow brine pools of their habitat. In terms of biological role, expression of 2 c-vac DNA fragments containing 2 divergently transcribed regions (gvpE-gvpF-gvpG-gvpH-gvpI-gvpJ-gvpK-gvpL-gvpM and gvpA-gvpC-gvpN-gvpO) allows H.volcanii to produce gas vesicles. The protein is Gas vesicle protein I2 of Halobacterium salinarum (strain ATCC 700922 / JCM 11081 / NRC-1) (Halobacterium halobium).